The sequence spans 131 residues: Glycine cleavage system H protein (131 aa).

A Lipoyl-binding domain is found at 24 to 106 (RAIVGISDHA…YGEGWIMVIE (83 aa)). Lys65 carries the post-translational modification N6-lipoyllysine.

It belongs to the GcvH family. The glycine cleavage system is composed of four proteins: P, T, L and H. Requires (R)-lipoate as cofactor.

In terms of biological role, the glycine cleavage system catalyzes the degradation of glycine. The H protein shuttles the methylamine group of glycine from the P protein to the T protein. In Xylella fastidiosa (strain M12), this protein is Glycine cleavage system H protein.